The chain runs to 266 residues: Undecaprenyl-diphosphatase (266 aa).

The next 8 membrane-spanning stretches (helical) occupy residues 2–22 (INILNAIILGIVQGITEFLPI), 39–59 (LPIIFDIYLHLATVLVIIIYY), 86–106 (LKLILLILIITIVTGVVGTFI), 112–132 (MFILPFILINFIITGILILML), 145–165 (ILLVGIFIGLMQGLGAFPGIS), 184–204 (AFEISFLSLIPIVFGAILFKY), 212–232 (MVLNFFEINLGALVAFVVGII), and 246–266 (LYYFSIYLFALSITFCCFFRI).

It belongs to the UppP family.

It localises to the cell inner membrane. The enzyme catalyses di-trans,octa-cis-undecaprenyl diphosphate + H2O = di-trans,octa-cis-undecaprenyl phosphate + phosphate + H(+). In terms of biological role, catalyzes the dephosphorylation of undecaprenyl diphosphate (UPP). Confers resistance to bacitracin. The chain is Undecaprenyl-diphosphatase from Borrelia garinii subsp. bavariensis (strain ATCC BAA-2496 / DSM 23469 / PBi) (Borreliella bavariensis).